A 445-amino-acid polypeptide reads, in one-letter code: SVP1-like protein 2 (445 aa).

WD repeat units lie at residues 218–258 (AHKA…LLKE) and 263–302 (LDRA…EGTL). The disordered stretch occupies residues 301–321 (TLNPANPEDHQSSGSNGHIKA). Residues 312–321 (SSGSNGHIKA) are compositionally biased toward polar residues.

Belongs to the WD repeat PROPPIN family.

The protein localises to the vacuole membrane. It is found in the cytoplasmic vesicle membrane. In terms of biological role, involved in mitochondrial or peroxisomal functions and amino acid signaling pathways. The sequence is that of SVP1-like protein 2 (HSV2) from Candida glabrata (strain ATCC 2001 / BCRC 20586 / JCM 3761 / NBRC 0622 / NRRL Y-65 / CBS 138) (Yeast).